Reading from the N-terminus, the 315-residue chain is Probable cytochrome c oxidase subunit 2 (315 aa).

The RPE1 insert domain maps to 6 to 53 (RHLSKPAYREEFKGDTSPRTAAYISNRADASLGSTYKLPLEAKFWKMS). 3 helical membrane passes run 41–61 (YKLP…CFLI), 96–116 (LLYI…FVCI), and 133–153 (VLIE…IAVP). Residues His235, Cys270, Cys274, and His278 each coordinate Cu cation.

This sequence belongs to the cytochrome c oxidase subunit 2 family. Cu cation serves as cofactor. It depends on heme as a cofactor.

It localises to the cell membrane. The enzyme catalyses 4 Fe(II)-[cytochrome c] + O2 + 8 H(+)(in) = 4 Fe(III)-[cytochrome c] + 2 H2O + 4 H(+)(out). In terms of biological role, subunits I and II form the functional core of the enzyme complex. Electrons originating in cytochrome c are transferred via heme a and Cu(A) to the binuclear center formed by heme a3 and Cu(B). This Rickettsia felis (strain ATCC VR-1525 / URRWXCal2) (Rickettsia azadi) protein is Probable cytochrome c oxidase subunit 2 (ctaC).